A 252-amino-acid chain; its full sequence is Segregation and condensation protein A (252 aa).

Residues 117–136 are disordered; the sequence is EREEERQNAFTKPPSDLSEF.

It belongs to the ScpA family. As to quaternary structure, component of a cohesin-like complex composed of ScpA, ScpB and the Smc homodimer, in which ScpA and ScpB bind to the head domain of Smc. The presence of the three proteins is required for the association of the complex with DNA.

Its subcellular location is the cytoplasm. Functionally, participates in chromosomal partition during cell division. May act via the formation of a condensin-like complex containing Smc and ScpB that pull DNA away from mid-cell into both cell halves. The chain is Segregation and condensation protein A from Bacillus pumilus (strain SAFR-032).